Reading from the N-terminus, the 70-residue chain is Small ribosomal subunit protein bS21 (70 aa).

The segment at 40 to 70 (KPTAERKRKHAAAVKRHYKRIRSQQLPPRLY) is disordered. Residues 45-61 (RKRKHAAAVKRHYKRIR) show a composition bias toward basic residues.

It belongs to the bacterial ribosomal protein bS21 family.

The protein is Small ribosomal subunit protein bS21 of Bordetella parapertussis (strain 12822 / ATCC BAA-587 / NCTC 13253).